Here is a 347-residue protein sequence, read N- to C-terminus: MKIIEEIPQKNIIKLMPENLDDLWVLYNIIEEGDKIFAVTERRVQDKGDVIRADRGAKRKMFLGIEVKNVEFDENTKRVRILGTIIHGPDDVPLGSHHTIEIKPFDELSIEKNWKKWQIERIKEAIESSKRPKVLVVVMDDEEADIFEVRDYSIKEICSIKSHTSKKLDYKINEELKKEYYHEIAKVLSEYDVDNILVAGPGFAKNSFYNFISSQYPELKNKIVVESISTTSRAGLNEVIKRGIINRIYAESRVAKETQLIEKLLEEIAKKGLAVYGIDEVKKALEYSAIDTLLVSDSLVRNHEIEKIIDTTEEMGGKVVIVSSEHDAGKQLKALGGIAGLLRFPIE.

The protein belongs to the eukaryotic release factor 1 family. Pelota subfamily. Monomer. Requires a divalent metal cation as cofactor.

It is found in the cytoplasm. In terms of biological role, may function in recognizing stalled ribosomes, interact with stem-loop structures in stalled mRNA molecules, and effect endonucleolytic cleavage of the mRNA. May play a role in the release non-functional ribosomes and degradation of damaged mRNAs. Has endoribonuclease activity. This chain is Protein pelota homolog, found in Methanocaldococcus jannaschii (strain ATCC 43067 / DSM 2661 / JAL-1 / JCM 10045 / NBRC 100440) (Methanococcus jannaschii).